The sequence spans 20 residues: Chrysophsin-3 (20 aa).

Histidine 20 carries the histidine amide modification.

In terms of tissue distribution, gill.

Its subcellular location is the secreted. Its function is as follows. Has antibacterial activity against Gram-positive bacteria B.subtilis ATCC 6633, L.garvieae ATCC 49156 and S.iniae F-8502, and Gram-negative bacteria E.coli WT-2, V.anguillarum ATCC 19264, V.penaeicida KHA, V.harveyi ATCC 14126, V.vulnificus ATCC 33148, A.salmonicida NCMB 1102 and P.putida ATCC 12633. Has hemolytic activity against human red blood cells. Seems to disrupt the membranes by adopting an alpha helical conformation. May play a significant role in innate host defense. The chain is Chrysophsin-3 from Pagrus major (Red sea bream).